The chain runs to 94 residues: Cell division protein CrgA (94 aa).

2 consecutive transmembrane segments (helical) span residues 31-51 (VWFV…LLVF) and 71-91 (LGPW…LLTM).

It belongs to the CrgA family.

Its subcellular location is the cell membrane. In terms of biological role, involved in cell division. The protein is Cell division protein CrgA of Mycobacterium sp. (strain JLS).